Here is a 1227-residue protein sequence, read N- to C-terminus: MSSKVEQLRAQLNERILVLDGGMGTMIQSYRLHEEDFRGERFADWPCDLKGNNDLLVLSKPEVIAAIHNAYFEAGADIIETNTFNSTTIAMADYRMESLSAEINYAAAKLARACADEWTARTPEKPRFVAGVLGPTNRTASISPDVNDPAFRNITFDQLVAAYRESTKALVEGGADLILIETVFDTLNAKAAVFAVKEEFEALGVDLPIMISGTITDASGRTLSGQTTEAFYNSLRHAEALTFGLNCALGPDELRQYVQELSRIAECYVTAHPNAGLPNAFGEYDLDADTMAKQIREWAEAGFLNIVGGCCGTTPEHIAAMSRAVAGLLPRQLPDIPVACRLSGLEPLNIGDDSLFVNVGERTNVTGSAKFKRLIKEEKYSEALDVARQQVESGAQIIDINMDEGMLDAEAAMVRFLSLIAGEPDIARVPIMIDSSKWEVIEKGLKCIQGKGIVNSISMKEGVEAFIHHAKLLRRYGAAVVVMAFDEQGQADTRARKIEICRRAYKILTEEVGFPPEDIIFDPNIFAVATGIEEHNNYAQDFIGACEDIKRELPHALISGGVSNVSFSFRGNDPVREAIHAVFLYYAIRNGMDMGIVNAGQLAIYDDLPAELRDAVEDVILNRRDDGTERLLDLAEKYRGSKTDEAANAQQAEWRSWDVKKRLEYSLVKGITEFIEQDTEEARQQAARPIEVIEGPLMDGMNVVGDLFGEGKMFLPQVVKSARVMKQAVAYLEPFIEASKEKGSSNGKMVIATVKGDVHDIGKNIVGVVLQCNNYEIVDLGVMVPAEKILRTAREVNADLIGLSGLITPSLDEMVNVAKEMERQGFTIPLLIGGATTSKAHTAVKIEQNYSGPTVYVQNASRTVGVVAALLSDTQRDDFVARTRKEYETVRIQHARKKPRTPPVTLEAARDNDLAFDWERYTPPVAHRLGVQEVEASIETLRNYIDWTPFFMTWSLAGKYPRILEDEVVGVEAQRLFKDANDMLDKLSAEKLLNPRGVVGLFPANRVGDDIEIYRDETRTHVLTVSHHLRQQTEKVGFANYCLADFVAPKLSGKADYIGAFAVTGGLEEDALADAFEAQHDDYNKIMVKAIADRLAEAFAEYLHERVRKVYWGYAPNESLSNDELIRENYQGIRPAPGYPACPEHTEKGTIWQLLDVEKHTGMKLTESFAMWPGASVSGWYFSHPESKYFAVAQIQRDQVTDYAFRKGMSVEDVERWLAPNLGYDAD.

In terms of domain architecture, Hcy-binding spans Ser2 to Val325. Zn(2+) is bound by residues Cys247, Cys310, and Cys311. A Pterin-binding domain is found at Phe356–Glu617. Residues Gln650 to Ser744 form the B12-binding N-terminal domain. Residues Glu694, Gly756–Asp760, His759, Ser804, Thr808, and Ala860 each bind methylcob(III)alamin. Residues Asn746–Ala881 form the B12-binding domain. The AdoMet activation domain occupies Lys897–Asp1227. Residues Asp946, Arg1134, and Tyr1189 to Phe1190 contribute to the S-adenosyl-L-methionine site.

Belongs to the vitamin-B12 dependent methionine synthase family. Requires methylcob(III)alamin as cofactor. Zn(2+) serves as cofactor.

The enzyme catalyses (6S)-5-methyl-5,6,7,8-tetrahydrofolate + L-homocysteine = (6S)-5,6,7,8-tetrahydrofolate + L-methionine. It participates in amino-acid biosynthesis; L-methionine biosynthesis via de novo pathway; L-methionine from L-homocysteine (MetH route): step 1/1. In terms of biological role, catalyzes the transfer of a methyl group from methyl-cobalamin to homocysteine, yielding enzyme-bound cob(I)alamin and methionine. Subsequently, remethylates the cofactor using methyltetrahydrofolate. The chain is Methionine synthase (metH) from Salmonella typhimurium (strain LT2 / SGSC1412 / ATCC 700720).